The sequence spans 70 residues: UPF0352 protein PBPRA2586 (70 aa).

The protein belongs to the UPF0352 family.

In Photobacterium profundum (strain SS9), this protein is UPF0352 protein PBPRA2586.